Here is a 344-residue protein sequence, read N- to C-terminus: DNA fragmentation factor subunit beta (344 aa).

The region spanning 7–83 is the CIDE-N domain; the sequence is QPKCVKLRAL…LLTAGETWHG (77 aa).

In terms of assembly, heterodimer of DFFA and DFFB. Interacts with H1-1.

It localises to the cytoplasm. It is found in the nucleus. Its activity is regulated as follows. Inhibited by DFFA (DFF45). Its function is as follows. Nuclease that induces DNA fragmentation and chromatin condensation during apoptosis. Degrades naked DNA and induces apoptotic morphology. This Mus musculus (Mouse) protein is DNA fragmentation factor subunit beta (Dffb).